The following is a 97-amino-acid chain: Putative mitochondrial import inner membrane translocase subunit Tim8 A-B (97 aa).

The Twin CX3C motif signature appears at 43–66 (CWEKCMDKPGPRLDGRAELCLVNC). Cystine bridges form between cysteine 43/cysteine 66 and cysteine 47/cysteine 62.

The protein belongs to the small Tim family. Heterohexamer; possibly composed of 3 copies of TIMM8AB and 3 copies of TIMM13.

Its subcellular location is the mitochondrion inner membrane. In terms of biological role, putative mitochondrial intermembrane chaperone that participates in the import and insertion of some multi-pass transmembrane proteins into the mitochondrial inner membrane. Also required for the transfer of beta-barrel precursors from the TOM complex to the sorting and assembly machinery (SAM complex) of the outer membrane. Acts as a chaperone-like protein that protects the hydrophobic precursors from aggregation and guide them through the mitochondrial intermembrane space. The polypeptide is Putative mitochondrial import inner membrane translocase subunit Tim8 A-B (Timm8a2) (Mus musculus (Mouse)).